A 1563-amino-acid polypeptide reads, in one-letter code: NACHT domain- and WD repeat-containing protein 1 (1563 aa).

A WD 1 repeat occupies 274–314; sequence TNHQVLEQLRELELARQELGWLYQEIRHHLWQSTESTKVFC. An NACHT domain is found at 336–666; it reads TPLVLFGPPG…HRQLSQVIQV (331 aa). 342–349 contacts ATP; sequence GPPGIGKT. 12 WD repeats span residues 866 to 905, 908 to 947, 954 to 994, 998 to 1037, 1044 to 1082, 1126 to 1165, 1168 to 1207, 1212 to 1251, 1253 to 1292, 1346 to 1385, 1386 to 1425, and 1431 to 1470; these read GCHK…VVHV, GHTA…EKVT, QNPT…LVFC, DVSD…LQEK, KEET…LLEK, EHED…TLLN, EGVG…KLQS, LDRT…EQDC, DTSN…DVLC, QLPE…FPLE, AHGS…GMFE, and SCCR…LLAV. Residues 1534–1563 form a disordered region; the sequence is AAEASQDAEPVAVEGKESKSNKRSQVCLIL.

In terms of assembly, may interact with HSP90AA1, HSP90AB1 and BAG2.

Its subcellular location is the cytoplasm. It localises to the cytosol. Its function is as follows. May play a role in the control of androgen receptor (AR) protein steady-state levels. This is NACHT domain- and WD repeat-containing protein 1 (Nwd1) from Mus musculus (Mouse).